The primary structure comprises 253 residues: Cyclin-C1-1 (253 aa).

It belongs to the cyclin family. Cyclin C subfamily.

This is Cyclin-C1-1 (CYCC1-1) from Arabidopsis thaliana (Mouse-ear cress).